The chain runs to 310 residues: Methionyl-tRNA formyltransferase (310 aa).

Residue 111–114 (SILP) coordinates (6S)-5,6,7,8-tetrahydrofolate.

The protein belongs to the Fmt family.

It carries out the reaction L-methionyl-tRNA(fMet) + (6R)-10-formyltetrahydrofolate = N-formyl-L-methionyl-tRNA(fMet) + (6S)-5,6,7,8-tetrahydrofolate + H(+). In terms of biological role, attaches a formyl group to the free amino group of methionyl-tRNA(fMet). The formyl group appears to play a dual role in the initiator identity of N-formylmethionyl-tRNA by promoting its recognition by IF2 and preventing the misappropriation of this tRNA by the elongation apparatus. The protein is Methionyl-tRNA formyltransferase of Methylobacterium nodulans (strain LMG 21967 / CNCM I-2342 / ORS 2060).